The chain runs to 414 residues: Carboxynorspermidine synthase (414 aa).

It belongs to the saccharopine dehydrogenase family. Carboxynorspermidine synthase subfamily. As to quaternary structure, homodimer.

It carries out the reaction carboxynorspermidine + NADP(+) + H2O = L-aspartate 4-semialdehyde + propane-1,3-diamine + NADPH + H(+). The enzyme catalyses carboxyspermidine + NADP(+) + H2O = L-aspartate 4-semialdehyde + putrescine + NADPH + H(+). With respect to regulation, activated by dithiothreitol and inhibited by SH-reactive compounds. In terms of biological role, involved in norspermidine biosynthesis. Catalyzes the synthesis of carboxynorspermidine from L-aspartate 4-semialdehyde and 1,3-diaminopropane. Is also slightly active with putrescine as a substrate. This is Carboxynorspermidine synthase from Vibrio alginolyticus (strain ATCC 17749 / DSM 2171 / NBRC 15630 / NCIMB 1903 / NCTC 12160 / XII-53).